A 359-amino-acid polypeptide reads, in one-letter code: Anhydro-N-acetylmuramic acid kinase (359 aa).

12–19 serves as a coordination point for ATP; sequence GTSLDGVD.

This sequence belongs to the anhydro-N-acetylmuramic acid kinase family.

It carries out the reaction 1,6-anhydro-N-acetyl-beta-muramate + ATP + H2O = N-acetyl-D-muramate 6-phosphate + ADP + H(+). It participates in amino-sugar metabolism; 1,6-anhydro-N-acetylmuramate degradation. Its pathway is cell wall biogenesis; peptidoglycan recycling. Catalyzes the specific phosphorylation of 1,6-anhydro-N-acetylmuramic acid (anhMurNAc) with the simultaneous cleavage of the 1,6-anhydro ring, generating MurNAc-6-P. Is required for the utilization of anhMurNAc either imported from the medium or derived from its own cell wall murein, and thus plays a role in cell wall recycling. The sequence is that of Anhydro-N-acetylmuramic acid kinase from Sulfurovum sp. (strain NBC37-1).